A 338-amino-acid chain; its full sequence is Lumican (338 aa).

The N-terminal stretch at 1 to 18 is a signal peptide; sequence MSLSAFTLFLALIGGTSG. Residue Gln19 is modified to Pyrrolidone carboxylic acid. 4 positions are modified to sulfotyrosine: Tyr20, Tyr21, Tyr23, and Tyr30. Residues 28-66 enclose the LRRNT domain; the sequence is SIYGQSSPNCAPECNCPESYPSAMYCDELKLKSVPMVPP. 10 LRR repeats span residues 67 to 88, 91 to 114, 117 to 137, 138 to 159, 160 to 181, 185 to 205, 206 to 227, 230 to 253, 255 to 276, and 277 to 296; these read GIKY…AFEN, DLQW…VFSK, QLKK…PLPK, SLED…EGLV, NLTF…AAFK, SLEY…GLPV, SLLT…YFKR, ALQY…SFNV, SLVE…NENL, and ENYY…SFCK. Asn88 carries N-linked (GlcNAc...) (keratan sulfate) asparagine glycosylation. Asn127 carries an N-linked (GlcNAc...) (keratan sulfate) asparagine glycan. N-linked (GlcNAc...) (keratan sulfate) asparagine glycosylation is present at Asn160. N-linked (GlcNAc...) (keratan sulfate) asparagine glycosylation occurs at Asn252. A disulfide bond links Cys295 and Cys328. The residue at position 304 (Ser304) is a Phosphoserine. Residues 305 to 326 form an LRR 11 repeat; sequence KIKHLRLDGNRISETSLPPDMY.

This sequence belongs to the small leucine-rich proteoglycan (SLRP) family. SLRP class II subfamily. Binds to laminin. Sulfated on tyrosine residue(s). Post-translationally, contains keratan sulfate. As to expression, cornea and other tissues.

The protein localises to the secreted. Its subcellular location is the extracellular space. It is found in the extracellular matrix. This is Lumican (LUM) from Homo sapiens (Human).